The following is a 496-amino-acid chain: Iroquois-class homeodomain protein irx-4-A (496 aa).

The homeobox; TALE-type DNA-binding region spans 141 to 203; the sequence is GSSRRKNATR…NARRRLKKEN (63 aa). The interval 203-246 is disordered; it reads NKMTWPPRNKCSDEKRPYDEEEEEEEEEEDSQKATIKNEKKTVD. Positions 221–232 are enriched in acidic residues; sequence DEEEEEEEEEED.

The protein belongs to the TALE/IRO homeobox family. As to expression, expressed in the neural plate in overlapping patterns with other irx members, which all share an anterior border of expression. At stage 20, expressed in a subset of cells in the developing hindbrain with expression appearing above the otic vesicle by stage 26. Expression in retina cells begins at stage 28, continuing at later stages and is limited to a subset of retinal cells of the optic cup. Also expressed in the ventricle of the heart from stage 36 (late tailbud) onwards. Only expressed in the pronephros at tadpole stage.

Its subcellular location is the nucleus. In terms of biological role, acts partially redundantly with other irx members in neural patterning. Required for formation of the posterior forebrain, midbrain, hindbrain, and to a lesser extent, spinal cord. Patterns the neuroectoderm in both the anterior/posterior and dorsal/ventral axes. Does not appear to play a role in pronephros kidney development. The polypeptide is Iroquois-class homeodomain protein irx-4-A (irx4-a) (Xenopus laevis (African clawed frog)).